Reading from the N-terminus, the 698-residue chain is SPX domain-containing membrane protein OsI_21475 (698 aa).

The SPX domain maps to 2 to 145 (VNFGKKLMAD…GYRFTDYYVT (144 aa)). Helical transmembrane passes span 248 to 268 (FMSLMLNLVNTFLYMVNTYII), 279 to 299 (LGAASTVCGVVIGSMAVAQIF), 316 to 336 (LIFSSIVLFLGNVCYAMAYDM), 339 to 357 (LTVLIIGRLLCGMGSARAV), 376 to 396 (AGFVSASALGMACGPALAGLL), and 412 to 432 (LPGWVMAVAWLLYLVWLWISF). A disordered region spans residues 467 to 495 (LLRDSSKKDEDDDEEVDDSEEGTHDSRKP). Over residues 476 to 486 (EDDDEEVDDSE) the composition is skewed to acidic residues. 5 consecutive transmembrane segments (helical) span residues 514-534 (LLIYFMLKYAMEILLSESSVI), 545-565 (AVAIFLAILGLTVLPVNAVVG), 577-597 (LLMVSQITLLVGIIFSFKITS), 605-625 (VVSALVTFVSAEVLEGVNLSL), and 671-691 (LLNVTLLPSLVICAASIASTF).

This sequence belongs to the major facilitator superfamily.

The protein localises to the membrane. This Oryza sativa subsp. indica (Rice) protein is SPX domain-containing membrane protein OsI_21475.